Here is a 197-residue protein sequence, read N- to C-terminus: Rac-like GTP-binding protein 6 (197 aa).

13-20 (GDGAVGKT) lines the GTP pocket. The Effector region signature appears at 35–43 (YVPTVFDNF). GTP is bound by residues 60-64 (DTAGQ) and 118-121 (TKLD). C194 is modified (cysteine methyl ester). C194 carries the S-geranylgeranyl cysteine lipid modification. Residues 195-197 (SIL) constitute a propeptide, removed in mature form.

This sequence belongs to the small GTPase superfamily. Rho family.

It localises to the cytoplasm. Its subcellular location is the membrane. Functionally, inactive GDP-bound Rho GTPases reside in the cytosol, are found in a complex with Rho GDP-dissociation inhibitors (Rho GDIs), and are released from the GDI protein in order to translocate to membranes upon activation. The polypeptide is Rac-like GTP-binding protein 6 (RAC6) (Oryza sativa subsp. japonica (Rice)).